The sequence spans 199 residues: Probable NADH dehydrogenase [ubiquinone] iron-sulfur protein 7, mitochondrial (199 aa).

4 residues coordinate [4Fe-4S] cluster: cysteine 74, cysteine 75, cysteine 139, and cysteine 169.

This sequence belongs to the complex I 20 kDa subunit family. Complex I is composed of 45 different subunits This is a component of the iron-sulfur (IP) fragment of the enzyme. Requires [4Fe-4S] cluster as cofactor.

Its subcellular location is the mitochondrion. It catalyses the reaction a ubiquinone + NADH + 5 H(+)(in) = a ubiquinol + NAD(+) + 4 H(+)(out). In terms of biological role, core subunit of the mitochondrial membrane respiratory chain NADH dehydrogenase (Complex I) that is believed to belong to the minimal assembly required for catalysis. Complex I functions in the transfer of electrons from NADH to the respiratory chain. The immediate electron acceptor for the enzyme is believed to be ubiquinone. The chain is Probable NADH dehydrogenase [ubiquinone] iron-sulfur protein 7, mitochondrial (nduf-7) from Caenorhabditis elegans.